Consider the following 291-residue polypeptide: Protein pxr1 (291 aa).

The segment covering Met-1 to Lys-11 has biased composition (basic residues). Disordered stretches follow at residues Met-1–Asp-26 and Leu-146–Arg-268. 2 stretches are compositionally biased toward polar residues: residues Asp-15–Thr-25 and Leu-146–Ala-156. The region spanning Thr-25–Lys-79 is the G-patch domain. A compositionally biased stretch (basic and acidic residues) spans Glu-194–Arg-205. The span at Lys-206–Lys-219 shows a compositional bias: basic residues. The segment covering Met-230–Glu-247 has biased composition (basic and acidic residues).

Belongs to the PINX1 family.

The protein resides in the nucleus. It is found in the nucleolus. Functionally, involved in rRNA-processing at A0, A1 and A2 sites and negatively regulates telomerase. The protein is Protein pxr1 (pxr1) of Aspergillus clavatus (strain ATCC 1007 / CBS 513.65 / DSM 816 / NCTC 3887 / NRRL 1 / QM 1276 / 107).